Consider the following 1197-residue polypeptide: Pleckstrin homology domain-containing family A member 7 (1197 aa).

2 WW domains span residues 8–41 (DTLP…HPRT) and 53–86 (SDLP…HPVT). Residues 98 to 148 (LQDQPGGRMLKQPSSTISEASTTVTTSTVDSTSGSKGSRSSGRVHSFGKRD) form a disordered region. A compositionally biased stretch (low complexity) spans 111-140 (SSTISEASTTVTTSTVDSTSGSKGSRSSGR). The 100-residue stretch at 158 to 257 (PVVVRGWLYK…WVRAMNQAAL (100 aa)) folds into the PH domain. 3 disordered regions span residues 348-384 (PGST…NGMP), 423-467 (LVST…QLPS), and 508-577 (FRHG…TVRP). The span at 528-546 (VSSTRNNSDVSRSVSVPPT) shows a compositional bias: low complexity. Over residues 568-577 (TPAERVTVRP) the composition is skewed to basic and acidic residues. Residues 678-799 (DKILQELEFR…RIEDVMTGLS (122 aa)) are a coiled coil. 2 disordered regions span residues 830-928 (SRCM…SYSN) and 1032-1064 (HQRA…SDPG). The span at 913-924 (RQSDERKRDRES) shows a compositional bias: basic and acidic residues. Positions 1016-1044 (QRVRMSVEEQLERMKRHQRALVRERKRNL) form a coiled coil. Residues 1032–1043 (HQRALVRERKRN) show a composition bias toward basic residues.

The protein localises to the cell junction. Its subcellular location is the adherens junction. It is found in the cytoplasm. The protein resides in the cytoskeleton. It localises to the microtubule organizing center. The protein localises to the centrosome. Functionally, required for zonula adherens biogenesis and maintenance. The protein is Pleckstrin homology domain-containing family A member 7 (plekha7) of Danio rerio (Zebrafish).